The chain runs to 101 residues: Anti-lipopolysaccharide factor (101 aa).

Cys31 and Cys52 are disulfide-bonded.

Binds tightly to LPS and thus specifically inhibits the LPS-mediated activation of the hemolymph coagulation. It has a strong antibacterial effect especially on the growth of Gram-negative bacteria. This is Anti-lipopolysaccharide factor from Limulus polyphemus (Atlantic horseshoe crab).